The chain runs to 624 residues: Chaperone protein HtpG (624 aa).

Residues 1–336 are a; substrate-binding; it reads MKGQETRGFQ…SNDLPLNVSR (336 aa). The segment at 337–552 is b; sequence EILQDSSVTR…ADEMSTQMAK (216 aa). A c region spans residues 553–624; the sequence is LFAAAGQAAP…IRRMNQLLAS (72 aa).

This sequence belongs to the heat shock protein 90 family. As to quaternary structure, homodimer.

Its subcellular location is the cytoplasm. In terms of biological role, molecular chaperone. Has ATPase activity. The protein is Chaperone protein HtpG of Klebsiella pneumoniae subsp. pneumoniae (strain ATCC 700721 / MGH 78578).